The primary structure comprises 503 residues: Lanosterol 14-alpha demethylase (503 aa).

Residues 24 to 44 (GNLLSTLLIACAFTLSLVYLF) form a helical membrane-spanning segment. Residue Cys449 coordinates heme.

This sequence belongs to the cytochrome P450 family. Requires heme as cofactor. In terms of processing, ubiquitinated by MARCHF6, leading to proteasomal degradation.

It is found in the endoplasmic reticulum membrane. Its subcellular location is the microsome membrane. The catalysed reaction is a 14alpha-methyl steroid + 3 reduced [NADPH--hemoprotein reductase] + 3 O2 = a Delta(14) steroid + formate + 3 oxidized [NADPH--hemoprotein reductase] + 4 H2O + 4 H(+). It catalyses the reaction lanosterol + 3 reduced [NADPH--hemoprotein reductase] + 3 O2 = 4,4-dimethyl-5alpha-cholesta-8,14,24-trien-3beta-ol + formate + 3 oxidized [NADPH--hemoprotein reductase] + 4 H2O + 4 H(+). The enzyme catalyses 24,25-dihydrolanosterol + 3 reduced [NADPH--hemoprotein reductase] + 3 O2 = 4,4-dimethyl-8,14-cholestadien-3beta-ol + formate + 3 oxidized [NADPH--hemoprotein reductase] + 4 H2O + 4 H(+). It carries out the reaction a 14alpha-methyl steroid + reduced [NADPH--hemoprotein reductase] + O2 = a 14alpha-hydroxymethyl steroid + oxidized [NADPH--hemoprotein reductase] + H2O + H(+). The catalysed reaction is a 14alpha-hydroxymethyl steroid + reduced [NADPH--hemoprotein reductase] + O2 = a 14alpha-formyl steroid + oxidized [NADPH--hemoprotein reductase] + 2 H2O + H(+). It catalyses the reaction a 14alpha-formyl steroid + reduced [NADPH--hemoprotein reductase] + O2 = a Delta(14) steroid + formate + oxidized [NADPH--hemoprotein reductase] + H2O + 2 H(+). The enzyme catalyses lanosterol + reduced [NADPH--hemoprotein reductase] + O2 = 32-hydroxylanosterol + oxidized [NADPH--hemoprotein reductase] + H2O + H(+). It carries out the reaction 32-hydroxylanosterol + reduced [NADPH--hemoprotein reductase] + O2 = 32-oxolanosterol + oxidized [NADPH--hemoprotein reductase] + 2 H2O + H(+). The catalysed reaction is 32-oxolanosterol + reduced [NADPH--hemoprotein reductase] + O2 = 4,4-dimethyl-5alpha-cholesta-8,14,24-trien-3beta-ol + formate + oxidized [NADPH--hemoprotein reductase] + H2O + 2 H(+). It catalyses the reaction 24,25-dihydrolanosterol + reduced [NADPH--hemoprotein reductase] + O2 = 32-hydroxy-24,25-dihydrolanosterol + oxidized [NADPH--hemoprotein reductase] + H2O + H(+). The enzyme catalyses 32-hydroxy-24,25-dihydrolanosterol + reduced [NADPH--hemoprotein reductase] + O2 = 32-oxo-24,25-dihydrolanosterol + oxidized [NADPH--hemoprotein reductase] + 2 H2O + H(+). It carries out the reaction 32-oxo-24,25-dihydrolanosterol + reduced [NADPH--hemoprotein reductase] + O2 = 4,4-dimethyl-8,14-cholestadien-3beta-ol + formate + oxidized [NADPH--hemoprotein reductase] + H2O + 2 H(+). It participates in steroid biosynthesis; zymosterol biosynthesis; zymosterol from lanosterol: step 1/6. With respect to regulation, inhibited by azalanstat. Inhibited by azole antifungal agents ketoconazole, itraconazole and fluconazole. In terms of biological role, sterol 14alpha-demethylase that plays a critical role in the cholesterol biosynthesis pathway, being cholesterol the major sterol component in mammalian membranes as well as a precursor for bile acid and steroid hormone synthesis. Cytochrome P450 monooxygenase that catalyzes the three-step oxidative removal of the 14alpha-methyl group (C-32) of sterols such as lanosterol (lanosta-8,24-dien-3beta-ol) and 24,25-dihydrolanosterol (DHL) in the form of formate, and converts the sterols to 4,4-dimethyl-5alpha-cholesta-8,14,24-trien-3beta-ol and 4,4-dimethyl-8,14-cholestadien-3beta-ol, respectively, which are intermediates of cholesterol biosynthesis. Can also demethylate substrates not intrinsic to mammals, such as eburicol (24-methylene-24,25-dihydrolanosterol), but at a lower rate than DHL. The chain is Lanosterol 14-alpha demethylase from Mus musculus (Mouse).